We begin with the raw amino-acid sequence, 328 residues long: Tetraacyldisaccharide 4'-kinase (328 aa).

ATP is bound at residue 52 to 59; sequence NAGGTGKT.

The protein belongs to the LpxK family.

It catalyses the reaction a lipid A disaccharide + ATP = a lipid IVA + ADP + H(+). It functions in the pathway glycolipid biosynthesis; lipid IV(A) biosynthesis; lipid IV(A) from (3R)-3-hydroxytetradecanoyl-[acyl-carrier-protein] and UDP-N-acetyl-alpha-D-glucosamine: step 6/6. Transfers the gamma-phosphate of ATP to the 4'-position of a tetraacyldisaccharide 1-phosphate intermediate (termed DS-1-P) to form tetraacyldisaccharide 1,4'-bis-phosphate (lipid IVA). The chain is Tetraacyldisaccharide 4'-kinase from Jannaschia sp. (strain CCS1).